A 132-amino-acid chain; its full sequence is Small ribosomal subunit protein uS12 (132 aa).

Residue D89 is modified to 3-methylthioaspartic acid. Residues 103 to 132 (DTSGVADRRQSRSKYGAKQPKEGGAAKGKK) form a disordered region.

This sequence belongs to the universal ribosomal protein uS12 family. As to quaternary structure, part of the 30S ribosomal subunit. Contacts proteins S8 and S17. May interact with IF1 in the 30S initiation complex.

Functionally, with S4 and S5 plays an important role in translational accuracy. In terms of biological role, interacts with and stabilizes bases of the 16S rRNA that are involved in tRNA selection in the A site and with the mRNA backbone. Located at the interface of the 30S and 50S subunits, it traverses the body of the 30S subunit contacting proteins on the other side and probably holding the rRNA structure together. The combined cluster of proteins S8, S12 and S17 appears to hold together the shoulder and platform of the 30S subunit. This Chlorobium phaeovibrioides (strain DSM 265 / 1930) (Prosthecochloris vibrioformis (strain DSM 265)) protein is Small ribosomal subunit protein uS12.